The sequence spans 485 residues: Protein nucleotidyltransferase YdiU (485 aa).

ATP-binding residues include Gly-90, Gly-92, Arg-93, Lys-113, Asp-125, Gly-126, Arg-176, and Arg-183. Asp-252 acts as the Proton acceptor in catalysis. The Mg(2+) site is built by Asn-253 and Asp-262. Asp-262 provides a ligand contact to ATP.

This sequence belongs to the SELO family. The cofactor is Mg(2+). Mn(2+) serves as cofactor.

The catalysed reaction is L-seryl-[protein] + ATP = 3-O-(5'-adenylyl)-L-seryl-[protein] + diphosphate. It catalyses the reaction L-threonyl-[protein] + ATP = 3-O-(5'-adenylyl)-L-threonyl-[protein] + diphosphate. The enzyme catalyses L-tyrosyl-[protein] + ATP = O-(5'-adenylyl)-L-tyrosyl-[protein] + diphosphate. It carries out the reaction L-histidyl-[protein] + UTP = N(tele)-(5'-uridylyl)-L-histidyl-[protein] + diphosphate. The catalysed reaction is L-seryl-[protein] + UTP = O-(5'-uridylyl)-L-seryl-[protein] + diphosphate. It catalyses the reaction L-tyrosyl-[protein] + UTP = O-(5'-uridylyl)-L-tyrosyl-[protein] + diphosphate. Nucleotidyltransferase involved in the post-translational modification of proteins. It can catalyze the addition of adenosine monophosphate (AMP) or uridine monophosphate (UMP) to a protein, resulting in modifications known as AMPylation and UMPylation. The sequence is that of Protein nucleotidyltransferase YdiU from Aliivibrio salmonicida (strain LFI1238) (Vibrio salmonicida (strain LFI1238)).